Reading from the N-terminus, the 22-residue chain is LKCEWDGLVGTRGEIAKETIER.

Belongs to the protease inhibitor I13 (potato type I serine protease inhibitor) family. As to quaternary structure, heterodimer of an A chain and a B chain, linked by a disulfide bond.

Functionally, inhibitor of chymotrypsin. The protein is Cytin chain B of Theromyzon tessulatum (Duck leech).